A 321-amino-acid polypeptide reads, in one-letter code: Long form salivary protein D7L1 (321 aa).

Residues 1-17 (MKLPLLLAIVTTFSVVA) form the signal peptide. Cystine bridges form between cysteine 34-cysteine 71 and cysteine 67-cysteine 124. Tryptophan 55 is a binding site for leukotriene E4. Glycine 148 and lysine 167 together coordinate leukotriene E4. Cystine bridges form between cysteine 175–cysteine 210, cysteine 191–cysteine 319, and cysteine 250–cysteine 268. Glutamate 176, arginine 194, and histidine 207 together coordinate noradrenaline. Noradrenaline contacts are provided by aspartate 283 and glutamate 286.

The protein belongs to the PBP/GOBP family. As to quaternary structure, (Microbial infection) Interacts with envelope protein of dengue virus type 2. Saliva (at protein level). Female salivary gland (at protein level). Detected in the head and thorax of the female mosquitoes, where the salivary glands are located. Expressed in the distal-lateral and medial lobes of the female salivary gland but not in the carcass. No or low-level expression in the adult male mosquito tissues.

It localises to the secreted. Modulates blood feeding of female mosquitoes on vertebrate species by binding and sequestering different mediators involved in the host response, such as biogenic amines and eicosanoids. Binds serotonin, histamine, leukotriene B4, leukotriene C4, leukotriene D4, leukotriene E4, adrenaline and noradrenaline. Does not bind tryptamine and U-46619, a stable analog of thromboxane A2. Exhibits vasodilating activity. Inhibits agonist-induced platelet aggregation but not blood clotting. Inhibits noradrenaline-induced smooth muscle contraction. Promotes an influx of host neutrophils at the inoculation site. Functionally, (Microbial infection) Probably promotes Plasmodium gallinaceum oocyst development in mosquito midgut. Its function is as follows. (Microbial infection) Exhibits antiviral activity against dengue virus type 2 probably through a direct interaction with dengue virus virions. This is Long form salivary protein D7L1 (D7) from Aedes aegypti (Yellowfever mosquito).